Consider the following 312-residue polypeptide: Protoheme IX farnesyltransferase 2 (312 aa).

Transmembrane regions (helical) follow at residues 31–51 (VMSL…GHIH), 52–72 (PVLG…SGAL), 119–139 (ALVN…YVVI), 152–172 (IVIG…AATG), 179–199 (LLLF…LALF), 225–245 (ILLY…LGYF), 247–267 (WVYG…AIEV), and 283–303 (LFAF…LDVV).

This sequence belongs to the UbiA prenyltransferase family. Protoheme IX farnesyltransferase subfamily.

Its subcellular location is the cell inner membrane. The catalysed reaction is heme b + (2E,6E)-farnesyl diphosphate + H2O = Fe(II)-heme o + diphosphate. The protein operates within porphyrin-containing compound metabolism; heme O biosynthesis; heme O from protoheme: step 1/1. In terms of biological role, converts heme B (protoheme IX) to heme O by substitution of the vinyl group on carbon 2 of heme B porphyrin ring with a hydroxyethyl farnesyl side group. The protein is Protoheme IX farnesyltransferase 2 of Nitrobacter winogradskyi (strain ATCC 25391 / DSM 10237 / CIP 104748 / NCIMB 11846 / Nb-255).